The primary structure comprises 367 residues: Ataxin-7-like protein 3 (367 aa).

The SGF11-type zinc finger occupies Cys-84–Cys-105. Residues Ala-116–Asn-125 show a composition bias toward low complexity. The segment at Ala-116–Asp-184 is disordered. The segment covering Asp-132–Asp-141 has biased composition (acidic residues). The SCA7 domain maps to Leu-199–Pro-266. Residues Ala-280–Ser-299 show a composition bias toward low complexity. The interval Ala-280–Asn-367 is disordered. The segment covering Gly-318–Ile-329 has biased composition (basic and acidic residues). The segment covering Ala-330–Ser-346 has biased composition (low complexity).

This sequence belongs to the SGF11 family. Component of some SAGA transcription coactivator-HAT complexes. Within the SAGA complex, participates in a subcomplex of SAGA called the DUB module (deubiquitination module).

The protein resides in the nucleus. Functionally, component of the transcription regulatory histone acetylation (HAT) complex SAGA, a multiprotein complex that activates transcription by remodeling chromatin and mediating histone acetylation and deubiquitination. Within the SAGA complex, participates in a subcomplex that specifically deubiquitinates histone H2B. The SAGA complex is recruited to specific gene promoters by activators, where it is required for transcription. In Danio rerio (Zebrafish), this protein is Ataxin-7-like protein 3 (atxn7l3).